The primary structure comprises 206 residues: Large ribosomal subunit protein uL4 (206 aa).

This sequence belongs to the universal ribosomal protein uL4 family. As to quaternary structure, part of the 50S ribosomal subunit.

In terms of biological role, one of the primary rRNA binding proteins, this protein initially binds near the 5'-end of the 23S rRNA. It is important during the early stages of 50S assembly. It makes multiple contacts with different domains of the 23S rRNA in the assembled 50S subunit and ribosome. Functionally, forms part of the polypeptide exit tunnel. This chain is Large ribosomal subunit protein uL4, found in Rhodopseudomonas palustris (strain ATCC BAA-98 / CGA009).